An 820-amino-acid chain; its full sequence is Probable beta-glucosidase ARB_05654 (820 aa).

Residues 1 to 18 (MLFRWCPLVALAIASGTA) form the signal peptide. Residues Asn-62 and Asn-276 are each glycosylated (N-linked (GlcNAc...) asparagine). Residue Asp-304 is part of the active site. N-linked (GlcNAc...) asparagine glycosylation is found at Asn-339, Asn-346, Asn-465, Asn-547, Asn-566, Asn-588, and Asn-811.

This sequence belongs to the glycosyl hydrolase 3 family.

It is found in the secreted. It catalyses the reaction Hydrolysis of terminal, non-reducing beta-D-glucosyl residues with release of beta-D-glucose.. Its pathway is glycan metabolism; cellulose degradation. Functionally, beta-glucosidases are one of a number of cellulolytic enzymes involved in the degradation of cellulosic biomass. Catalyzes the last step releasing glucose from the inhibitory cellobiose. In Arthroderma benhamiae (strain ATCC MYA-4681 / CBS 112371) (Trichophyton mentagrophytes), this protein is Probable beta-glucosidase ARB_05654.